The primary structure comprises 205 residues: Nuclear transcription factor Y subunit beta (205 aa).

Residues 1-50 (MDGDSSTTDASQLGIAGDYIGGSHYVIQPHDDTEDSMNDHEDTNGSKESF) form an a domain region. The tract at residues 24-50 (HYVIQPHDDTEDSMNDHEDTNGSKESF) is disordered. The segment covering 37–50 (MNDHEDTNGSKESF) has biased composition (basic and acidic residues). The interval 51–140 (REQDIYLPIA…PLKLYLQKFR (90 aa)) is b domain. The DNA-binding element occupies 57–63 (LPIANVA). Positions 84 to 95 (VQECVSEFISFI) are subunit association domain (SAD). Residues 141–201 (EAMKGEKGIG…SYQQISGVQQ (61 aa)) are c domain.

The protein belongs to the NFYB/HAP3 subunit family. In terms of assembly, heterotrimeric transcription factor composed of three components, NF-YA, NF-YB and NF-YC. NF-YB and NF-YC must interact and dimerize for NF-YA association and DNA binding.

It is found in the nucleus. Component of the sequence-specific heterotrimeric transcription factor (NF-Y) which specifically recognizes a 5'-CCAAT-3' box motif found in the promoters of its target genes. NF-Y can function as both an activator and a repressor, depending on its interacting cofactors. The sequence is that of Nuclear transcription factor Y subunit beta (NFYB) from Gallus gallus (Chicken).